The following is a 718-amino-acid chain: Myeloperoxidase (718 aa).

An N-terminal signal peptide occupies residues 1–15; it reads MKLLLALAGLLAPLA. Positions 16–138 are excised as a propeptide; it reads MLQTSNGATP…SSGCAYQDVR (123 aa). An N-linked (GlcNAc...) asparagine glycan is attached at Asn-113. A disulfide bridge links Cys-141 with Cys-154. Residue Asp-234 participates in heme b binding. The active-site Proton acceptor is the His-235. Residue Asp-236 participates in Ca(2+) binding. 2 cysteine pairs are disulfide-bonded: Cys-255–Cys-265 and Cys-259–Cys-283. Cysteine sulfenic acid (-SOH) is present on Cys-290. Asn-297 carries an N-linked (GlcNAc...) asparagine glycan. Ca(2+)-binding residues include Thr-308, Phe-310, Asp-312, and Ser-314. N-linked (GlcNAc...) asparagine glycans are attached at residues Asn-329 and Asn-365. Cys-361 and Cys-372 are joined by a disulfide. Residues Glu-382 and Met-383 each coordinate heme b. An N-linked (GlcNAc...) asparagine glycan is attached at Asn-457. Position 476 (His-476) interacts with heme b. Disulfide bonds link Cys-580–Cys-637 and Cys-678–Cys-704. N-linked (GlcNAc...) asparagine glycosylation occurs at Asn-711.

Belongs to the peroxidase family. XPO subfamily. In terms of assembly, homodimer; disulfide-linked. Each monomer consists of a light and a heavy chain. Found in a complex with CP and LTF; interacts directly with CP, which protects CP antioxidant properties by MPO. Ca(2+) serves as cofactor. Heme b is required as a cofactor.

Its subcellular location is the lysosome. The catalysed reaction is chloride + H2O2 + H(+) = hypochlorous acid + H2O. Its function is as follows. Part of the host defense system of polymorphonuclear leukocytes. It is responsible for microbicidal activity against a wide range of organisms. In the stimulated PMN, MPO catalyzes the production of hypohalous acids, primarily hypochlorous acid in physiologic situations, and other toxic intermediates that greatly enhance PMN microbicidal activity. Mediates the proteolytic cleavage of alpha-1-microglobulin to form t-alpha-1-microglobulin, which potently inhibits oxidation of low density lipoprotein particles and limits vascular damage. The polypeptide is Myeloperoxidase (Mpo) (Mus musculus (Mouse)).